Here is a 559-residue protein sequence, read N- to C-terminus: ATP-dependent RNA helicase HAS1 (559 aa).

A disordered region spans residues 1 to 90 (MAPRSQSKSQ…TSEAEADEPG (90 aa)). Basic and acidic residues-rich tracts occupy residues 9 to 22 (SQREPLRKRSREDA) and 55 to 75 (PDQKQKQKQSKDEKRLQELTK). The Q motif motif lies at 93–121 (YSFEKADFSEPTMKAIKEMGFQKMTKVQA). In terms of domain architecture, Helicase ATP-binding spans 124 to 300 (IPPLLAGRDV…RISLRPGPLY (177 aa)). Residue 137–144 (AKTGSGKT) participates in ATP binding. The DEAD box motif lies at 247-250 (DEAD). One can recognise a Helicase C-terminal domain in the interval 314–484 (GLEQGYVVCD…NVQSQLTKLI (171 aa)).

The protein belongs to the DEAD box helicase family. DDX18/HAS1 subfamily. Associates in the nucleolus with the 60S and pre-60S ribosomal subunits.

The protein resides in the nucleus. Its subcellular location is the nucleolus. It carries out the reaction ATP + H2O = ADP + phosphate + H(+). Functionally, ATP-dependent RNA helicase involved in 40S ribosomal subunit biogenesis. Required for the processing and cleavage of 35S pre-rRNA at sites A0, A1, and A2, leading to mature 18S rRNA. In Lodderomyces elongisporus (strain ATCC 11503 / CBS 2605 / JCM 1781 / NBRC 1676 / NRRL YB-4239) (Yeast), this protein is ATP-dependent RNA helicase HAS1 (HAS1).